A 214-amino-acid chain; its full sequence is Metalloproteinase inhibitor 3 (214 aa).

The first 26 residues, 1–26, serve as a signal peptide directing secretion; the sequence is MVFSTTAALSLLLALSSMQLSEVSEA. Zn(2+) is bound at residue Cys27. 2 involved in metalloproteinase-binding regions span residues 27 to 30 and 91 to 92; these read CTCM and ES. Cystine bridges form between Cys27/Cys94, Cys29/Cys121, Cys39/Cys146, Cys148/Cys195, Cys153/Cys158, and Cys166/Cys187. In terms of domain architecture, NTR spans 27 to 146; the sequence is CTCMPNHPQE…GLNHRYQYGC (120 aa). An N-linked (GlcNAc...) asparagine glycan is attached at Asn210.

This sequence belongs to the protease inhibitor I35 (TIMP) family. Expressed abundantly in brain and cartilage.

It localises to the secreted. The protein resides in the extracellular space. It is found in the extracellular matrix. Functionally, complexes with metalloproteinases (such as collagenases) and irreversibly inactivates them by binding to their catalytic zinc cofactor. May form part of a tissue-specific acute response to remodeling stimuli. The polypeptide is Metalloproteinase inhibitor 3 (TIMP3) (Scyliorhinus torazame (Cloudy catshark)).